Consider the following 285-residue polypeptide: 3',5'-nucleoside bisphosphate phosphatase (285 aa).

The Mn(2+) site is built by histidine 7, histidine 9, aspartate 14, histidine 39, glutamate 64, and histidine 75. Substrate-binding residues include aspartate 14 and histidine 39. Residues 99-102 (RLER) and 134-135 (RT) each bind substrate. The Mn(2+) site is built by histidine 191, aspartate 248, and histidine 250. Residue histidine 250 coordinates substrate.

The protein belongs to the PHP family. As to quaternary structure, monomer. Mn(2+) serves as cofactor.

It catalyses the reaction a ribonucleoside 3',5'-bisphosphate + H2O = a ribonucleoside 5'-phosphate + phosphate. In terms of biological role, hydrolyzes 3',5'-bisphosphonucleosides (pGp, pCp, pUp, and pIp) to nucleoside 5'-phosphate and orthophosphate. Has similar catalytic efficiencies with all the bases. Also shows activity with ribonucleoside 2'-deoxyribonucleoside 3',5'-bisphosphates. Does not show activity with nucleoside 2',5'-bisphosphates. The protein is 3',5'-nucleoside bisphosphate phosphatase of Chromobacterium violaceum (strain ATCC 12472 / DSM 30191 / JCM 1249 / CCUG 213 / NBRC 12614 / NCIMB 9131 / NCTC 9757 / MK).